The chain runs to 359 residues: Glycerol-1-phosphate dehydrogenase [NAD(P)+] (359 aa).

NAD(+) is bound by residues 107–111 and 129–132; these read GRVID and TAAS. D134 provides a ligand contact to substrate. S138 serves as a coordination point for NAD(+). D181 contributes to the substrate binding site. Zn(2+) contacts are provided by D181 and H261. Residue H265 participates in substrate binding. H277 lines the Zn(2+) pocket.

Belongs to the glycerol-1-phosphate dehydrogenase family. The cofactor is Zn(2+).

The protein localises to the cytoplasm. The enzyme catalyses sn-glycerol 1-phosphate + NAD(+) = dihydroxyacetone phosphate + NADH + H(+). It catalyses the reaction sn-glycerol 1-phosphate + NADP(+) = dihydroxyacetone phosphate + NADPH + H(+). The protein operates within membrane lipid metabolism; glycerophospholipid metabolism. Its function is as follows. Catalyzes the NAD(P)H-dependent reduction of dihydroxyacetonephosphate (DHAP or glycerone phosphate) to glycerol 1-phosphate (G1P). The G1P thus generated is used as the glycerophosphate backbone of phospholipids in the cellular membranes of Archaea. The chain is Glycerol-1-phosphate dehydrogenase [NAD(P)+] from Methanoregula boonei (strain DSM 21154 / JCM 14090 / 6A8).